The sequence spans 284 residues: Formamidopyrimidine-DNA glycosylase (284 aa).

The Schiff-base intermediate with DNA role is filled by proline 2. Glutamate 3 functions as the Proton donor in the catalytic mechanism. The active-site Proton donor; for beta-elimination activity is lysine 61. 3 residues coordinate DNA: histidine 95, arginine 115, and arginine 157. The segment at 243 to 277 (AVYGRAGQPCRRCGTAIVREPFMNRSSFRCPACQP) adopts an FPG-type zinc-finger fold. Arginine 267 (proton donor; for delta-elimination activity) is an active-site residue.

It belongs to the FPG family. As to quaternary structure, monomer. Requires Zn(2+) as cofactor.

It catalyses the reaction Hydrolysis of DNA containing ring-opened 7-methylguanine residues, releasing 2,6-diamino-4-hydroxy-5-(N-methyl)formamidopyrimidine.. It carries out the reaction 2'-deoxyribonucleotide-(2'-deoxyribose 5'-phosphate)-2'-deoxyribonucleotide-DNA = a 3'-end 2'-deoxyribonucleotide-(2,3-dehydro-2,3-deoxyribose 5'-phosphate)-DNA + a 5'-end 5'-phospho-2'-deoxyribonucleoside-DNA + H(+). Involved in base excision repair of DNA damaged by oxidation or by mutagenic agents. Acts as a DNA glycosylase that recognizes and removes damaged bases. Has a preference for oxidized purines, such as 7,8-dihydro-8-oxoguanine (8-oxoG). Has AP (apurinic/apyrimidinic) lyase activity and introduces nicks in the DNA strand. Cleaves the DNA backbone by beta-delta elimination to generate a single-strand break at the site of the removed base with both 3'- and 5'-phosphates. The protein is Formamidopyrimidine-DNA glycosylase of Acidothermus cellulolyticus (strain ATCC 43068 / DSM 8971 / 11B).